Consider the following 209-residue polypeptide: Orotate phosphoribosyltransferase (209 aa).

Residues Arg96, Lys100, His102, and 122 to 130 contribute to the 5-phospho-alpha-D-ribose 1-diphosphate site; that span reads EDLISTGGS. Ser126 contributes to the orotate binding site.

Belongs to the purine/pyrimidine phosphoribosyltransferase family. PyrE subfamily. In terms of assembly, homodimer. Mg(2+) is required as a cofactor.

The enzyme catalyses orotidine 5'-phosphate + diphosphate = orotate + 5-phospho-alpha-D-ribose 1-diphosphate. The protein operates within pyrimidine metabolism; UMP biosynthesis via de novo pathway; UMP from orotate: step 1/2. Its function is as follows. Catalyzes the transfer of a ribosyl phosphate group from 5-phosphoribose 1-diphosphate to orotate, leading to the formation of orotidine monophosphate (OMP). This chain is Orotate phosphoribosyltransferase, found in Streptococcus thermophilus (strain CNRZ 1066).